We begin with the raw amino-acid sequence, 239 residues long: ATP-dependent dethiobiotin synthetase BioD (239 aa).

15–20 (EIGKTF) contributes to the ATP binding site. Residue T19 coordinates Mg(2+). K40 is a catalytic residue. Residues D57, 118-121 (EGVG), 178-179 (NH), and 211-213 (AHL) each bind ATP. Positions 57 and 118 each coordinate Mg(2+).

The protein belongs to the dethiobiotin synthetase family. Homodimer. It depends on Mg(2+) as a cofactor.

It is found in the cytoplasm. The enzyme catalyses (7R,8S)-7,8-diammoniononanoate + CO2 + ATP = (4R,5S)-dethiobiotin + ADP + phosphate + 3 H(+). Its pathway is cofactor biosynthesis; biotin biosynthesis; biotin from 7,8-diaminononanoate: step 1/2. In terms of biological role, catalyzes a mechanistically unusual reaction, the ATP-dependent insertion of CO2 between the N7 and N8 nitrogen atoms of 7,8-diaminopelargonic acid (DAPA, also called 7,8-diammoniononanoate) to form a ureido ring. This is ATP-dependent dethiobiotin synthetase BioD from Burkholderia vietnamiensis (strain G4 / LMG 22486) (Burkholderia cepacia (strain R1808)).